A 512-amino-acid polypeptide reads, in one-letter code: Monocarboxylate transporter 14 (512 aa).

Over 1-29 the chain is Cytoplasmic; the sequence is MYTSHEDIGYDLEDDRKAKNKKTLKPHPD. Helical transmembrane passes span 30–50, 76–96, 105–125, 129–149, 161–181, 193–211, 317–337, 355–375, 381–401, 410–430, 446–466, and 476–496; these read IDGGWAWMMVLSSFFVHILIM, WVSSLSMGITLIVGPFIGLFI, AIIGGLVNSLGWVLSAYAANV, FITFGVAAGLGSGMAYLPAVV, LAQGLSTTGTGFGTFLMTVLL, AMFIQGALSLNLCVCGALM, MFVAFIFWALFAYSSFVIPFI, FPLTSIIAILHIFGKVILGAV, ISVWNVFLIANFTLVLSIFLL, LAVICALIGFSSGYFSLMPVV, IIICANGISALLGPPFAGWIF, and FYICGLLYMVGILFLLIQPCI. At 497–512 the chain is on the cytoplasmic side; sequence QMIDQSRRKCIEGAHV.

Belongs to the major facilitator superfamily. Monocarboxylate porter (TC 2.A.1.13) family.

The protein resides in the cell membrane. Its function is as follows. Proton-linked monocarboxylate transporter. May catalyze the transport of monocarboxylates across the plasma membrane. This is Monocarboxylate transporter 14 (Slc16a14) from Mus musculus (Mouse).